The following is a 292-amino-acid chain: NAD kinase (292 aa).

The Proton acceptor role is filled by Asp-73. NAD(+) is bound by residues 73-74, 147-148, His-158, Arg-175, Asp-177, 188-193, and Gln-247; these read DG, NE, and TAYSLS.

Belongs to the NAD kinase family. The cofactor is a divalent metal cation.

The protein resides in the cytoplasm. The catalysed reaction is NAD(+) + ATP = ADP + NADP(+) + H(+). Functionally, involved in the regulation of the intracellular balance of NAD and NADP, and is a key enzyme in the biosynthesis of NADP. Catalyzes specifically the phosphorylation on 2'-hydroxyl of the adenosine moiety of NAD to yield NADP. This is NAD kinase from Escherichia coli O157:H7.